We begin with the raw amino-acid sequence, 90 residues long: RING finger protein Z (90 aa).

A lipid anchor (N-myristoyl glycine; by host) is attached at Gly-2. The RING-type; atypical zinc-finger motif lies at 32-68; sequence CKSCWQKFDSLVRCHDHYLCRHCLNLLLSVSDRCPLC. The short motif at 85–88 is the PPXY motif element; the sequence is PPPY.

Belongs to the arenaviridae Z protein family. In terms of assembly, interacts with protein NP; this interaction probably directs the encapsidated genome to budding sites. Interacts (via RING-type zinc finger) with polymerase L; this interaction inhibits viral transcription and replication, Z partially blocks the product exit tunnel for the releasing nascent RNA product. Interacts with the glycoprotein complex; this interaction plays a role in virion budding. Interacts (via RING-type zinc finger) with host EIF4E; this interaction results in conformational changes of both interacting proteins and reduces EIF4E affinity for its substrate, the 5'-m7 G cap structure. Interacts (via late-budding domain) with host TSG101; this interaction is essential for budding and release of viral particles. Interacts with host RPLP0; this interaction may serve to load ribosome-like particles inside the virion. Interacts with host PML; this interaction induces PML bodies redistribution in the cytoplasm upon viral infection. Myristoylation is required for the role of RING finger protein Z in assembly and budding.

The protein resides in the virion. It localises to the host cytoplasm. The protein localises to the host perinuclear region. It is found in the host cell membrane. Its function is as follows. Plays a crucial role in virion assembly and budding. Expressed late in the virus life cycle, it acts as an inhibitor of viral transcription and RNA synthesis by interacting with the viral polymerase L. Presumably recruits the NP encapsidated genome to cellular membranes at budding sites via direct interaction with NP. Plays critical roles in the final steps of viral release by interacting with host TSG101, a member of the vacuolar protein-sorting pathway and using other cellular host proteins involved in vesicle formation pathway. The budding of the virus progeny occurs after association of protein Z with the viral glycoprotein complex SSP-GP1-GP2 at the cell periphery, step that requires myristoylation of protein Z. Also selectively represses protein production by associating with host EIF4E. In cell-based minigenome assay, has an inhibitory effect on the ribonucleoprotein machinery (vRNP), which is responsible for the replication and transcription of the viral genome. This Homo sapiens (Human) protein is RING finger protein Z.